We begin with the raw amino-acid sequence, 86 residues long: Large ribosomal subunit protein bL27 (86 aa).

Residues 1–24 are disordered; that stretch reads MATKKAGGSSRNGRDSAGRRLGVK.

It belongs to the bacterial ribosomal protein bL27 family.

This chain is Large ribosomal subunit protein bL27, found in Rickettsia felis (strain ATCC VR-1525 / URRWXCal2) (Rickettsia azadi).